A 320-amino-acid polypeptide reads, in one-letter code: Fructose-1,6-bisphosphatase class 1 (320 aa).

Glu-84, Asp-103, Leu-105, and Asp-106 together coordinate Mg(2+). Substrate-binding positions include 106 to 109 (DGSS), Asn-196, and Lys-262. Glu-268 serves as a coordination point for Mg(2+).

The protein belongs to the FBPase class 1 family. Homotetramer. The cofactor is Mg(2+).

The protein resides in the cytoplasm. It carries out the reaction beta-D-fructose 1,6-bisphosphate + H2O = beta-D-fructose 6-phosphate + phosphate. Its pathway is carbohydrate biosynthesis; gluconeogenesis. The sequence is that of Fructose-1,6-bisphosphatase class 1 from Shewanella amazonensis (strain ATCC BAA-1098 / SB2B).